Reading from the N-terminus, the 483-residue chain is Isocitrate dehydrogenase [NADP] (483 aa).

Position 74 (Thr-74) interacts with NADP(+). Ser-83, Asn-85, Arg-89, Arg-99, and Arg-121 together coordinate D-threo-isocitrate. Asp-232 is a binding site for Mg(2+). Residues 264-270 (HGSAPDI) and Asn-277 each bind NADP(+).

Belongs to the isocitrate and isopropylmalate dehydrogenases family. In terms of assembly, homodimer. Requires Mg(2+) as cofactor. It depends on Mn(2+) as a cofactor.

It carries out the reaction D-threo-isocitrate + NADP(+) = 2-oxoglutarate + CO2 + NADPH. Functionally, catalyzes the oxidative decarboxylation of isocitrate to 2-oxoglutarate and carbon dioxide with the concomitant reduction of NADP(+). This is Isocitrate dehydrogenase [NADP] (icd) from Rickettsia prowazekii (strain Madrid E).